We begin with the raw amino-acid sequence, 285 residues long: Malectin (285 aa).

The N-terminal stretch at 1–26 (MRRVTLHCAARLVIAALWLLVEVCRA) is a signal peptide. At 27 to 262 (ESGAQSLAER…TPNPYATDNS (236 aa)) the chain is on the lumenal side. The a carbohydrate site is built by tyrosine 71, tyrosine 93, tyrosine 120, phenylalanine 121, and aspartate 190. Residues 209–258 (KLQPHPGLEKREEEEEEEEEGEGPEGEKKSASTSPKNPVRSGPRTPNPYA) form a disordered region. Acidic residues predominate over residues 220–232 (EEEEEEEEEGEGP). Residue asparagine 261 is glycosylated (N-linked (GlcNAc...) asparagine). A helical membrane pass occupies residues 263–283 (SLMFPILVAFGVFIPTLFCLC). Topologically, residues 284 to 285 (RL) are cytoplasmic.

The protein belongs to the malectin family.

It is found in the endoplasmic reticulum membrane. In terms of biological role, carbohydrate-binding protein with a strong ligand preference for Glc2-N-glycan. May play a role in the early steps of protein N-glycosylation. In Danio rerio (Zebrafish), this protein is Malectin.